Here is a 130-residue protein sequence, read N- to C-terminus: Small ribosomal subunit protein uS9 (130 aa).

This sequence belongs to the universal ribosomal protein uS9 family.

The protein is Small ribosomal subunit protein uS9 of Burkholderia mallei (strain NCTC 10247).